The primary structure comprises 325 residues: Lipoyl synthase (325 aa).

Cysteine 68, cysteine 73, cysteine 79, cysteine 94, cysteine 98, cysteine 101, and serine 308 together coordinate [4Fe-4S] cluster. Residues 80-297 (FGGGTATFMI…ARVANELGFT (218 aa)) enclose the Radical SAM core domain.

The protein belongs to the radical SAM superfamily. Lipoyl synthase family. The cofactor is [4Fe-4S] cluster.

It is found in the cytoplasm. The catalysed reaction is [[Fe-S] cluster scaffold protein carrying a second [4Fe-4S](2+) cluster] + N(6)-octanoyl-L-lysyl-[protein] + 2 oxidized [2Fe-2S]-[ferredoxin] + 2 S-adenosyl-L-methionine + 4 H(+) = [[Fe-S] cluster scaffold protein] + N(6)-[(R)-dihydrolipoyl]-L-lysyl-[protein] + 4 Fe(3+) + 2 hydrogen sulfide + 2 5'-deoxyadenosine + 2 L-methionine + 2 reduced [2Fe-2S]-[ferredoxin]. Its pathway is protein modification; protein lipoylation via endogenous pathway; protein N(6)-(lipoyl)lysine from octanoyl-[acyl-carrier-protein]: step 2/2. Functionally, catalyzes the radical-mediated insertion of two sulfur atoms into the C-6 and C-8 positions of the octanoyl moiety bound to the lipoyl domains of lipoate-dependent enzymes, thereby converting the octanoylated domains into lipoylated derivatives. The sequence is that of Lipoyl synthase from Alcanivorax borkumensis (strain ATCC 700651 / DSM 11573 / NCIMB 13689 / SK2).